We begin with the raw amino-acid sequence, 274 residues long: TIP41-like protein (274 aa).

It belongs to the TIP41 family.

This chain is TIP41-like protein (tiprl), found in Dictyostelium discoideum (Social amoeba).